We begin with the raw amino-acid sequence, 221 residues long: Probable septum site-determining protein MinC (221 aa).

The protein belongs to the MinC family. As to quaternary structure, interacts with MinD and FtsZ.

In terms of biological role, cell division inhibitor that blocks the formation of polar Z ring septums. Rapidly oscillates between the poles of the cell to destabilize FtsZ filaments that have formed before they mature into polar Z rings. Prevents FtsZ polymerization. The chain is Probable septum site-determining protein MinC from Shewanella frigidimarina (strain NCIMB 400).